Here is a 264-residue protein sequence, read N- to C-terminus: Probable glycerophosphodiester phosphodiesterase 2 (264 aa).

The region spanning 17 to 255 is the GP-PDE domain; sequence RIAMAHRGFT…DRADLLRDVL (239 aa). The active-site Proton acceptor is the H22. A divalent metal cation contacts are provided by E50, D52, and H65. The Proton donor role is filled by H65.

Belongs to the glycerophosphoryl diester phosphodiesterase family. A divalent metal cation is required as a cofactor.

It carries out the reaction a sn-glycero-3-phosphodiester + H2O = an alcohol + sn-glycerol 3-phosphate + H(+). Functionally, glycerophosphodiester phosphodiesterase hydrolyzes glycerophosphodiesters into glycerol-3-phosphate (G3P) and the corresponding alcohol. The sequence is that of Probable glycerophosphodiester phosphodiesterase 2 from Mycobacterium tuberculosis (strain ATCC 25618 / H37Rv).